The chain runs to 549 residues: MLNQKIQNPNPDELMIEIDLCYELDPYELKLDEMIEAEPEPEMIEGLPASDALTPADRYLELFEHVQSAKIFPDSKTFPDCAPKMDPLDILIRYRKVRRHRDFDLRQFVENHFWLPEVYSSEYVSNPENSLKEHIDQLWPVLTREPQDHIPWSSLLALPQSYIVPGGRFSETYYWDSYFTMLGLAESGREDLLKCMADNFAWMIENYGHIPNGNRTYYLSRSQPPVFALMVELFEEDGVRGARRYLDHLKMEYAFWMDGAESLIPNQAYRHVVRMPDGSLLNRYWDDRDTPRDESWLEDVETAKHSGRPPNEVYRDLRAGAASGWDYSSRWLRDAGRLASIRTTQFIPIDLNAFLFKLESAIANISALKGDKETETLFRQKANARRDAVNRYLWDDENGIYRDYDWRREQLALFSAAAIVPLYVGMASHEQADRLGDAVRNRLLTPGGILATEYETGEQWDKPNGWAPLQWMAIQGFKMYGDDHLGDEIAHSWLQTVNLFYQQHHKLIEKYHIAGGTPREGGGGEYPLQDGFGWTNGVVRRLISLYGEP.

Substrate is bound by residues Arg-168, 175 to 176, Asn-212, 221 to 223, 292 to 294, and Gly-324; these read WD, RSQ, and RDE. Catalysis depends on proton donor/acceptor residues Asp-326 and Glu-509. Residue Glu-525 participates in substrate binding.

It belongs to the glycosyl hydrolase 37 family. Monomer.

It localises to the cytoplasm. It carries out the reaction alpha,alpha-trehalose + H2O = alpha-D-glucose + beta-D-glucose. Its pathway is glycan degradation; trehalose degradation; D-glucose from alpha,alpha-trehalose: step 1/1. Its function is as follows. Hydrolyzes trehalose to glucose. Could be involved, in cells returning to low osmolarity conditions, in the utilization of the accumulated cytoplasmic trehalose, which was synthesized in response to high osmolarity. The protein is Cytoplasmic trehalase of Escherichia fergusonii (strain ATCC 35469 / DSM 13698 / CCUG 18766 / IAM 14443 / JCM 21226 / LMG 7866 / NBRC 102419 / NCTC 12128 / CDC 0568-73).